The chain runs to 232 residues: Ribonuclease 3 (232 aa).

An RNase III domain is found at Q6–G135. E48 serves as a coordination point for Mg(2+). The active site involves D52. Residues D121 and E124 each contribute to the Mg(2+) site. E124 is an active-site residue. The DRBM domain maps to D161–M230.

This sequence belongs to the ribonuclease III family. In terms of assembly, homodimer. The cofactor is Mg(2+).

The protein localises to the cytoplasm. It catalyses the reaction Endonucleolytic cleavage to 5'-phosphomonoester.. Digests double-stranded RNA. Involved in the processing of primary rRNA transcript to yield the immediate precursors to the large and small rRNAs (23S and 16S). Processes some mRNAs, and tRNAs when they are encoded in the rRNA operon. Processes pre-crRNA and tracrRNA of type II CRISPR loci if present in the organism. In Limosilactobacillus fermentum (strain NBRC 3956 / LMG 18251) (Lactobacillus fermentum), this protein is Ribonuclease 3.